A 248-amino-acid chain; its full sequence is 2,3-bisphosphoglycerate-dependent phosphoglycerate mutase (248 aa).

Residues 8-15 (RHGESGWN) and Arg58 contribute to the substrate site. Residue His9 is the Tele-phosphohistidine intermediate of the active site. The tract at residues 82 to 101 (GTGEDRTEREDGSRKDRKEK) is disordered. The Proton donor/acceptor role is filled by Glu124. Substrate contacts are provided by residues 124–127 (ERYY) and Lys135.

It belongs to the phosphoglycerate mutase family. BPG-dependent PGAM subfamily.

The enzyme catalyses (2R)-2-phosphoglycerate = (2R)-3-phosphoglycerate. It functions in the pathway carbohydrate degradation; glycolysis; pyruvate from D-glyceraldehyde 3-phosphate: step 3/5. Its function is as follows. Catalyzes the interconversion of 2-phosphoglycerate and 3-phosphoglycerate. The chain is 2,3-bisphosphoglycerate-dependent phosphoglycerate mutase from Methanosarcina acetivorans (strain ATCC 35395 / DSM 2834 / JCM 12185 / C2A).